We begin with the raw amino-acid sequence, 93 residues long: Integration host factor subunit beta (93 aa).

It belongs to the bacterial histone-like protein family. As to quaternary structure, heterodimer of an alpha and a beta chain.

Functionally, this protein is one of the two subunits of integration host factor, a specific DNA-binding protein that functions in genetic recombination as well as in transcriptional and translational control. This chain is Integration host factor subunit beta (ihfB), found in Mannheimia haemolytica (Pasteurella haemolytica).